We begin with the raw amino-acid sequence, 428 residues long: Trigger factor (428 aa).

One can recognise a PPIase FKBP-type domain in the interval alanine 165–proline 240.

This sequence belongs to the FKBP-type PPIase family. Tig subfamily.

It is found in the cytoplasm. It carries out the reaction [protein]-peptidylproline (omega=180) = [protein]-peptidylproline (omega=0). Its function is as follows. Involved in protein export. Acts as a chaperone by maintaining the newly synthesized protein in an open conformation. Functions as a peptidyl-prolyl cis-trans isomerase. The polypeptide is Trigger factor (Prosthecochloris aestuarii (strain DSM 271 / SK 413)).